The chain runs to 132 residues: Translation initiation factor 5A (132 aa).

Hypusine is present on Lys36.

This sequence belongs to the eIF-5A family.

It is found in the cytoplasm. Functionally, functions by promoting the formation of the first peptide bond. The sequence is that of Translation initiation factor 5A (eIF5A) from Pyrobaculum neutrophilum (strain DSM 2338 / JCM 9278 / NBRC 100436 / V24Sta) (Thermoproteus neutrophilus).